Reading from the N-terminus, the 324-residue chain is Probable pectinesterase A (324 aa).

Residues 1–19 (MHLPSLVLGLLGLGLTASA) form the signal peptide. An N-linked (GlcNAc...) asparagine glycan is attached at Asn27. Substrate is bound at residue Gln142. Residue Asp165 is the Proton donor of the active site. The active-site Nucleophile is Asp186. Residue Asn191 is glycosylated (N-linked (GlcNAc...) asparagine). Residues Arg246 and Trp248 each coordinate substrate.

The protein belongs to the pectinesterase family.

The protein resides in the secreted. It catalyses the reaction [(1-&gt;4)-alpha-D-galacturonosyl methyl ester](n) + n H2O = [(1-&gt;4)-alpha-D-galacturonosyl](n) + n methanol + n H(+). The protein operates within glycan metabolism; pectin degradation; 2-dehydro-3-deoxy-D-gluconate from pectin: step 1/5. Functionally, involved in maceration and soft-rotting of plant tissue. The protein is Probable pectinesterase A (pmeA) of Neosartorya fischeri (strain ATCC 1020 / DSM 3700 / CBS 544.65 / FGSC A1164 / JCM 1740 / NRRL 181 / WB 181) (Aspergillus fischerianus).